A 232-amino-acid polypeptide reads, in one-letter code: 7-cyano-7-deazaguanine synthase (232 aa).

8–18 (FSGGQDSTTCL) is an ATP binding site. Residues Cys187, Cys196, Cys199, and Cys202 each contribute to the Zn(2+) site.

It belongs to the QueC family. Requires Zn(2+) as cofactor.

It catalyses the reaction 7-carboxy-7-deazaguanine + NH4(+) + ATP = 7-cyano-7-deazaguanine + ADP + phosphate + H2O + H(+). Its pathway is purine metabolism; 7-cyano-7-deazaguanine biosynthesis. In terms of biological role, catalyzes the ATP-dependent conversion of 7-carboxy-7-deazaguanine (CDG) to 7-cyano-7-deazaguanine (preQ(0)). The polypeptide is 7-cyano-7-deazaguanine synthase (Photobacterium profundum (strain SS9)).